A 66-amino-acid polypeptide reads, in one-letter code: U1-theraphotoxin-Cg1b (66 aa).

A signal peptide spans 1 to 21 (MKTSALFVIFGLVLLFCNSFA). Positions 22-29 (AELKTTGR) are excised as a propeptide. Intrachain disulfides connect cysteine 31/cysteine 46, cysteine 38/cysteine 51, and cysteine 45/cysteine 58.

The protein belongs to the neurotoxin 10 (Hwtx-1) family. 46 (Jztx-7/10/12) subfamily. As to expression, expressed by the venom gland.

The protein resides in the secreted. In terms of biological role, probable ion channel inhibitor. This Chilobrachys guangxiensis (Chinese earth tiger tarantula) protein is U1-theraphotoxin-Cg1b.